The chain runs to 392 residues: Protein FAM53C (392 aa).

Methionine 1 is modified (N-acetylmethionine). The segment at leucine 76–serine 120 is disordered. Positions serine 85–serine 97 are enriched in low complexity. Residues serine 122 and serine 162 each carry the phosphoserine modification. Disordered regions lie at residues leucine 141–valine 167 and aspartate 201–arginine 294. The segment covering aspartate 201–tryptophan 215 has biased composition (polar residues). Phosphoserine occurs at positions 232, 234, 255, and 273. Residues alanine 241 to proline 256 show a composition bias toward low complexity. A compositionally biased stretch (basic and acidic residues) spans leucine 278–arginine 294. Phosphoserine is present on serine 299.

Belongs to the FAM53 family.

This Bos taurus (Bovine) protein is Protein FAM53C.